Consider the following 225-residue polypeptide: Tryptophan synthase beta chain (225 aa).

The protein belongs to the TrpB family. As to quaternary structure, tetramer of two alpha and two beta chains. Requires pyridoxal 5'-phosphate as cofactor.

It carries out the reaction (1S,2R)-1-C-(indol-3-yl)glycerol 3-phosphate + L-serine = D-glyceraldehyde 3-phosphate + L-tryptophan + H2O. It functions in the pathway amino-acid biosynthesis; L-tryptophan biosynthesis; L-tryptophan from chorismate: step 5/5. In terms of biological role, the beta subunit is responsible for the synthesis of L-tryptophan from indole and L-serine. This is Tryptophan synthase beta chain (trpB) from Buchnera aphidicola subsp. Rhopalosiphum maidis.